A 796-amino-acid chain; its full sequence is Protein tyrosine phosphatase domain-containing protein 1 (796 aa).

Residues 126–297 (YSSWVTDNIL…LIPLRNIFSC (172 aa)) enclose the Tyrosine-protein phosphatase domain. C234 acts as the Phosphocysteine intermediate in catalysis. A phosphoserine mark is found at S435 and S437.

It belongs to the protein-tyrosine phosphatase family. Non-receptor class PTPDC1 subfamily.

Functionally, may play roles in cilia formation and/or maintenance. This chain is Protein tyrosine phosphatase domain-containing protein 1 (PTPDC1), found in Bos taurus (Bovine).